We begin with the raw amino-acid sequence, 731 residues long: MFKTHKIEIEWAGRPLTLETGKIARQADGAVIATYGETIVLATVVSAKSPKPDQDFFPLTVNYQEKSYAVGRIPGGYLKRESRPSENETLVSRLIDRPIRPLFVEGYKNDTQVIVSVIQHDLENNPDILAMIASSAALTLSGVPFMGPIAGARVGYCNGQYVLNPHMDEMPESKLDLVVAGTESAVLMVESEAQELPEDIMLGAVMFGHKGLQPVLDAIIKLAEVAAKDPRDFVPEDLSDLEKAMQEMAEQDIRKAYTITDKQERYAAIDALKTEIINKFMPETEEDCQFSTDQIATVFKQLQAKIVRGNILDTKKRIDGRNLSTVRPIQSEVSILPRTHGSALFTRGETQAIVVATLGTGEDEQYIDALTGMYKETFLLHYNFPPFSVGETGRLGSPGRREIGHGKLAWRAIHPMLPTKESFPYTIRAVSEITESNGSSSMATVCGTSLALMDAGVPLARPVAGIAMGLIKEGERFAVLSDILGDEDHLGDMDFKVAGTENGITALQMDIKIDGITEEIMKIALEQAKDGRIHILNEMAKALTSARAELSEFSPRIEVINIAVDKIRDVIGSGGKVIREIVEQTGAKINIEDDGTIKIASADAKTIEAAKRWIHSIVDEPEVGAIYQGTVVKTADFGAFINFFGSRDGLVHISQLASERVTKTTDIVKEGDKVWVKLMGFDERGKVRLSMKAVDQKTGKEMTDDKSVKEEKCMDEKKQPENKRRRKKKEE.

Residues Asp-488 and Asp-494 each contribute to the Mg(2+) site. Residues 555-614 (PRIEVINIAVDKIRDVIGSGGKVIREIVEQTGAKINIEDDGTIKIASADAKTIEAAKRWI) form the KH domain. One can recognise an S1 motif domain in the interval 624–692 (GAIYQGTVVK…ERGKVRLSMK (69 aa)). Residues 693 to 731 (AVDQKTGKEMTDDKSVKEEKCMDEKKQPENKRRRKKKEE) are disordered. The span at 694-722 (VDQKTGKEMTDDKSVKEEKCMDEKKQPEN) shows a compositional bias: basic and acidic residues.

This sequence belongs to the polyribonucleotide nucleotidyltransferase family. Requires Mg(2+) as cofactor.

It is found in the cytoplasm. It catalyses the reaction RNA(n+1) + phosphate = RNA(n) + a ribonucleoside 5'-diphosphate. In terms of biological role, involved in mRNA degradation. Catalyzes the phosphorolysis of single-stranded polyribonucleotides processively in the 3'- to 5'-direction. The chain is Polyribonucleotide nucleotidyltransferase from Bartonella tribocorum (strain CIP 105476 / IBS 506).